The sequence spans 156 residues: Small ribosomal subunit protein uS7 (156 aa).

It belongs to the universal ribosomal protein uS7 family. As to quaternary structure, part of the 30S ribosomal subunit. Contacts proteins S9 and S11.

One of the primary rRNA binding proteins, it binds directly to 16S rRNA where it nucleates assembly of the head domain of the 30S subunit. Is located at the subunit interface close to the decoding center, probably blocks exit of the E-site tRNA. The sequence is that of Small ribosomal subunit protein uS7 from Brucella melitensis biotype 1 (strain ATCC 23456 / CCUG 17765 / NCTC 10094 / 16M).